A 455-amino-acid chain; its full sequence is Epoxide hydrolase 1 (455 aa).

The helical; Signal-anchor for type III membrane protein transmembrane segment at 1 to 21 (MWLEILLTSVLGFAIYWFISR) threads the bilayer. At 22-455 (DKEETLPLED…RKFLSVLERQ (434 aa)) the chain is on the cytoplasmic side. Asp226 functions as the Nucleophile in the catalytic mechanism. Arg295 carries the dimethylated arginine modification. Tyr374 serves as the catalytic Proton donor. His431 acts as the Proton acceptor in catalysis.

The protein belongs to the peptidase S33 family. As to expression, found in liver.

Its subcellular location is the microsome membrane. It is found in the endoplasmic reticulum membrane. The catalysed reaction is cis-stilbene oxide + H2O = (1R,2R)-hydrobenzoin. It carries out the reaction 1-(4-methoxyphenyl)-N-methyl-N-[(3-methyloxetan-3-yl)methyl]methanamine + H2O = 2-{[(4-methoxybenzyl)(methyl)amino]methyl}-2-methylpropane-1,3-diol. The enzyme catalyses 8,9-epoxy-(5Z,11Z,14Z)-eicosatrienoate + H2O = 8,9-dihydroxy-(5Z,11Z,14Z)-eicosatrienoate. It catalyses the reaction 11,12-epoxy-(5Z,8Z,14Z)-eicosatrienoate + H2O = 11,12-dihydroxy-(5Z,8Z,14Z)-eicosatrienoate. The catalysed reaction is 2-(5Z,8Z,11Z,14Z-eicosatetraenoyl)-glycerol + H2O = glycerol + (5Z,8Z,11Z,14Z)-eicosatetraenoate + H(+). Its activity is regulated as follows. Inhibited by 10-hydroxystearamide and methoxy-arachidonyl fluorophosphate. In terms of biological role, biotransformation enzyme that catalyzes the hydrolysis of arene and aliphatic epoxides to less reactive and more water soluble dihydrodiols by the trans addition of water. Plays a role in the metabolism of endogenous lipids such as epoxide-containing fatty acids. Metabolizes the abundant endocannabinoid 2-arachidonoylglycerol (2-AG) to free arachidonic acid (AA) and glycerol. Binds 20(S)-hydroxycholesterol (20(S)-OHC). This Homo sapiens (Human) protein is Epoxide hydrolase 1.